The sequence spans 396 residues: Ribosomal RNA large subunit methyltransferase I (396 aa).

Residues 2–79 (AIRIKLKPGR…REEEIDRAFF (78 aa)) form the PUA domain.

It belongs to the methyltransferase superfamily. RlmI family.

The protein resides in the cytoplasm. It catalyses the reaction cytidine(1962) in 23S rRNA + S-adenosyl-L-methionine = 5-methylcytidine(1962) in 23S rRNA + S-adenosyl-L-homocysteine + H(+). Specifically methylates the cytosine at position 1962 (m5C1962) of 23S rRNA. The chain is Ribosomal RNA large subunit methyltransferase I from Shewanella putrefaciens (strain CN-32 / ATCC BAA-453).